A 77-amino-acid polypeptide reads, in one-letter code: Conotoxin Mr8.2 (77 aa).

Residues 1 to 16 (MLRLITAAVLVSACLA) form the signal peptide. The propeptide occupies 17–32 (YPQKKRTPPQTRPTSR).

The protein belongs to the conotoxin B2 family. In terms of processing, contains 5 disulfide bonds. As to expression, expressed by the venom duct.

Its subcellular location is the secreted. The chain is Conotoxin Mr8.2 from Conus marmoreus (Marble cone).